A 473-amino-acid polypeptide reads, in one-letter code: Photosystem II CP43 reaction center protein (473 aa).

Residues 1–14 (MKTLYSLRRFYHVE) constitute a propeptide that is removed on maturation. The residue at position 15 (threonine 15) is an N-acetylthreonine. Residue threonine 15 is modified to Phosphothreonine. Transmembrane regions (helical) follow at residues 69–93 (LFEV…PHLA), 134–155 (LLGP…KDRN), 178–200 (KASY…RKIT), 255–275 (KPFA…LSYS), and 291–312 (WFNN…ASQA). Position 367 (glutamate 367) interacts with [CaMn4O5] cluster. A helical membrane pass occupies residues 447–471 (RARAAAAGFEKGIDRDFEPVLSMTP).

This sequence belongs to the PsbB/PsbC family. PsbC subfamily. In terms of assembly, PSII is composed of 1 copy each of membrane proteins PsbA, PsbB, PsbC, PsbD, PsbE, PsbF, PsbH, PsbI, PsbJ, PsbK, PsbL, PsbM, PsbT, PsbX, PsbY, PsbZ, Psb30/Ycf12, at least 3 peripheral proteins of the oxygen-evolving complex and a large number of cofactors. It forms dimeric complexes. The cofactor is Binds multiple chlorophylls and provides some of the ligands for the Ca-4Mn-5O cluster of the oxygen-evolving complex. It may also provide a ligand for a Cl- that is required for oxygen evolution. PSII binds additional chlorophylls, carotenoids and specific lipids..

It localises to the plastid. The protein localises to the chloroplast thylakoid membrane. Functionally, one of the components of the core complex of photosystem II (PSII). It binds chlorophyll and helps catalyze the primary light-induced photochemical processes of PSII. PSII is a light-driven water:plastoquinone oxidoreductase, using light energy to abstract electrons from H(2)O, generating O(2) and a proton gradient subsequently used for ATP formation. This is Photosystem II CP43 reaction center protein from Cicer arietinum (Chickpea).